The primary structure comprises 1089 residues: Protein phosphatase 1 regulatory subunit 3A (1089 aa).

The disordered stretch occupies residues 32-57 (KATFKPGFSPQPSRRGSGSSEDMYLD). Residues 37–51 (PGFSPQPSRRGSGSS) show a composition bias toward low complexity. Residues serine 40 and serine 44 each carry the phosphoserine; by GSK3 modification. Serine 48 and serine 51 each carry phosphoserine. Threonine 58 carries the post-translational modification Phosphothreonine. The PP1-binding motif signature appears at 64–67 (RRVS). Serine 67 carries the post-translational modification Phosphoserine; by PKA. Positions 123–231 (EQLQVQKAVL…NNNGTNYILV (109 aa)) constitute a CBM21 domain. Disordered regions lie at residues 385–420 (FYHS…GDTS), 479–501 (HGDS…KVDN), and 566–649 (PCPS…SDIA). Positions 581-600 (SGSNLEPGTSDLSSPRNFSP) are enriched in polar residues. Positions 602 to 614 (TDDHLFQADRENS) are enriched in basic and acidic residues. Positions 615–625 (DSSNPENQNMN) are enriched in polar residues. Serine 821 carries the post-translational modification Phosphoserine. The tract at residues 949 to 968 (IMKSGSGGERGGGPILQQKE) is disordered. The segment covering 953–962 (GSGGERGGGP) has biased composition (gly residues). The chain crosses the membrane as a helical span at residues 1047–1067 (LLFLIFLATVYYYDLMIGLAF).

In terms of assembly, interacts with PPP1CC catalytic subunit of PP1, and associates with glycogen. Post-translationally, phosphorylation at Ser-48 by ISPK stimulates the dephosphorylation of glycogen synthase and phosphorylase kinase. In terms of tissue distribution, skeletal muscle and heart.

Its subcellular location is the membrane. Functionally, seems to act as a glycogen-targeting subunit for PP1. PP1 is essential for cell division, and participates in the regulation of glycogen metabolism, muscle contractility and protein synthesis. Plays an important role in glycogen synthesis but is not essential for insulin activation of glycogen synthase. This Mus musculus (Mouse) protein is Protein phosphatase 1 regulatory subunit 3A (Ppp1r3a).